The chain runs to 463 residues: Metalloprotease slr0863 (463 aa).

It belongs to the peptidase U62 family.

Functionally, probable metalloprotease. The sequence is that of Metalloprotease slr0863 from Synechocystis sp. (strain ATCC 27184 / PCC 6803 / Kazusa).